The sequence spans 185 residues: UPF0397 protein AYWB_013 (185 aa).

5 consecutive transmembrane segments (helical) span residues 13–33 (IGLS…PVGF), 42–62 (AFLA…VGLI), 69–89 (FFLF…IGFI), 109–129 (IVYF…FFAP), and 148–168 (FLIV…LMTI).

Belongs to the UPF0397 family.

Its subcellular location is the cell membrane. This chain is UPF0397 protein AYWB_013, found in Aster yellows witches'-broom phytoplasma (strain AYWB).